A 245-amino-acid polypeptide reads, in one-letter code: tRNA (guanine-N(1)-)-methyltransferase (245 aa).

Residues Gly113 and 133–138 (IGDYVL) contribute to the S-adenosyl-L-methionine site.

The protein belongs to the RNA methyltransferase TrmD family. Homodimer.

It localises to the cytoplasm. It carries out the reaction guanosine(37) in tRNA + S-adenosyl-L-methionine = N(1)-methylguanosine(37) in tRNA + S-adenosyl-L-homocysteine + H(+). Functionally, specifically methylates guanosine-37 in various tRNAs. The protein is tRNA (guanine-N(1)-)-methyltransferase of Anoxybacillus flavithermus (strain DSM 21510 / WK1).